Reading from the N-terminus, the 396-residue chain is Putative carbamoyltransferase YgeW (396 aa).

Residues 71–74, Gln98, 165–168, and 330–331 each bind carbamoyl phosphate; these read STRT, HPTQ, and CL.

It belongs to the aspartate/ornithine carbamoyltransferase superfamily. In terms of assembly, homotrimer.

In Escherichia coli O157:H7, this protein is Putative carbamoyltransferase YgeW (ygeW).